Consider the following 499-residue polypeptide: Apolipoprotein N-acyltransferase (499 aa).

6 helical membrane-spanning segments follow: residues Leu-9–Leu-29, Leu-50–Val-70, Phe-77–Ser-97, Phe-114–Leu-134, Ile-148–Ile-168, and Leu-183–Val-203. A CN hydrolase domain is found at Val-220–Ser-464. The active-site Proton acceptor is Glu-259. The active site involves Lys-322. The Nucleophile role is filled by Cys-372. A helical membrane pass occupies residues Thr-466–Val-486.

The protein belongs to the CN hydrolase family. Apolipoprotein N-acyltransferase subfamily.

Its subcellular location is the cell inner membrane. The catalysed reaction is N-terminal S-1,2-diacyl-sn-glyceryl-L-cysteinyl-[lipoprotein] + a glycerophospholipid = N-acyl-S-1,2-diacyl-sn-glyceryl-L-cysteinyl-[lipoprotein] + a 2-acyl-sn-glycero-3-phospholipid + H(+). It participates in protein modification; lipoprotein biosynthesis (N-acyl transfer). Functionally, catalyzes the phospholipid dependent N-acylation of the N-terminal cysteine of apolipoprotein, the last step in lipoprotein maturation. The sequence is that of Apolipoprotein N-acyltransferase from Rickettsia bellii (strain RML369-C).